Here is a 524-residue protein sequence, read N- to C-terminus: L-lactate permease (524 aa).

Transmembrane regions (helical) follow at residues 12-34, 38-60, 67-89, 127-149, 156-178, 193-215, 224-246, 250-267, 297-319, 339-361, 374-396, 411-433, and 505-522; these read LAVS…TVFK, IQAA…HLPF, IVQG…VWLY, LEGA…SLGF, MLCL…VGII, SMMT…IWLM, ILPA…TIFI, LADI…ALFL, WSPF…KGLL, IEVG…VTTV, SLLK…IIGI, EAVA…IGVF, and YSFG…ILSL.

The protein belongs to the lactate permease family.

The protein resides in the cell membrane. In terms of biological role, may play a role in L-lactate transport. The polypeptide is L-lactate permease (lctP) (Halalkalibacterium halodurans (strain ATCC BAA-125 / DSM 18197 / FERM 7344 / JCM 9153 / C-125) (Bacillus halodurans)).